A 954-amino-acid polypeptide reads, in one-letter code: Glycine dehydrogenase (decarboxylating) (954 aa).

An N6-(pyridoxal phosphate)lysine modification is found at K704.

Belongs to the GcvP family. In terms of assembly, the glycine cleavage system is composed of four proteins: P, T, L and H. Pyridoxal 5'-phosphate serves as cofactor.

It catalyses the reaction N(6)-[(R)-lipoyl]-L-lysyl-[glycine-cleavage complex H protein] + glycine + H(+) = N(6)-[(R)-S(8)-aminomethyldihydrolipoyl]-L-lysyl-[glycine-cleavage complex H protein] + CO2. Functionally, the glycine cleavage system catalyzes the degradation of glycine. The P protein binds the alpha-amino group of glycine through its pyridoxal phosphate cofactor; CO(2) is released and the remaining methylamine moiety is then transferred to the lipoamide cofactor of the H protein. The sequence is that of Glycine dehydrogenase (decarboxylating) from Rhizobium meliloti (strain 1021) (Ensifer meliloti).